The chain runs to 212 residues: NAD(P)H-hydrate epimerase (212 aa).

A YjeF N-terminal domain is found at 11–212; the sequence is MRHYDSYTIN…ANDMGTYAVD (202 aa). 60–64 contacts (6S)-NADPHX; sequence NNGGD. K(+) is bound by residues N61 and D123. (6S)-NADPHX contacts are provided by residues 127 to 133, Y138, and D156; that span reads GIGIDRA. S159 serves as a coordination point for K(+).

Belongs to the NnrE/AIBP family. Requires K(+) as cofactor.

The enzyme catalyses (6R)-NADHX = (6S)-NADHX. It carries out the reaction (6R)-NADPHX = (6S)-NADPHX. Its function is as follows. Catalyzes the epimerization of the S- and R-forms of NAD(P)HX, a damaged form of NAD(P)H that is a result of enzymatic or heat-dependent hydration. This is a prerequisite for the S-specific NAD(P)H-hydrate dehydratase to allow the repair of both epimers of NAD(P)HX. This chain is NAD(P)H-hydrate epimerase, found in Limosilactobacillus reuteri (strain ATCC 55730 / SD2112) (Lactobacillus reuteri).